The sequence spans 255 residues: MLPEEILFMVFSFLDVKELIACSHACSHACSQWRRICSDKLLWVQKAELFGPESPIEQFINWRKLLCVEGSYSILTRKKIIRGIAISNSGMCKAYNYGVIFLEKYHNSYRENEVYYKPYPLFDSIKYIENILSCSYGNEDPYYFYRIDIDNRVPNENIPDIIENFIGMSKKYPFINIFAFVCTQEKIQVITPLVSGLNLTMKIFHQDRWENVSEWISEVIWKRDFMCGSTFCLKKLPSLSELSVLSRYESELVTY.

An F-box domain is found at Met1 to Lys46.

The polypeptide is Putative F-box protein L126 (Acanthamoeba polyphaga (Amoeba)).